The primary structure comprises 475 residues: Ribulose bisphosphate carboxylase large chain (475 aa).

The propeptide occupies 1–2 (MS). Pro3 is subject to N-acetylproline. Residue Lys14 is modified to N6,N6,N6-trimethyllysine. Positions 123 and 173 each coordinate substrate. The active-site Proton acceptor is the Lys175. Lys177 provides a ligand contact to substrate. Residues Lys201, Asp203, and Glu204 each contribute to the Mg(2+) site. Lys201 is subject to N6-carboxylysine. The active-site Proton acceptor is His294. Residues Arg295, His327, and Ser379 each contribute to the substrate site.

The protein belongs to the RuBisCO large chain family. Type I subfamily. As to quaternary structure, heterohexadecamer of 8 large chains and 8 small chains; disulfide-linked. The disulfide link is formed within the large subunit homodimers. Mg(2+) is required as a cofactor. In terms of processing, the disulfide bond which can form in the large chain dimeric partners within the hexadecamer appears to be associated with oxidative stress and protein turnover.

Its subcellular location is the plastid. It localises to the chloroplast. It carries out the reaction 2 (2R)-3-phosphoglycerate + 2 H(+) = D-ribulose 1,5-bisphosphate + CO2 + H2O. It catalyses the reaction D-ribulose 1,5-bisphosphate + O2 = 2-phosphoglycolate + (2R)-3-phosphoglycerate + 2 H(+). Functionally, ruBisCO catalyzes two reactions: the carboxylation of D-ribulose 1,5-bisphosphate, the primary event in carbon dioxide fixation, as well as the oxidative fragmentation of the pentose substrate in the photorespiration process. Both reactions occur simultaneously and in competition at the same active site. This chain is Ribulose bisphosphate carboxylase large chain, found in Equisetum arvense (Field horsetail).